The sequence spans 33 residues: Gastrin (33 aa).

Position 1 is a pyrrolidone carboxylic acid (glutamine 1). At tyrosine 28 the chain carries Sulfotyrosine. Position 33 is a phenylalanine amide (phenylalanine 33).

The protein belongs to the gastrin/cholecystokinin family. In terms of processing, sulfation enhances proteolytic processing, and blocks peptide degradation. Levels of sulfation differ between proteolytically-cleaved gastrins and between tissues.

It localises to the secreted. In terms of biological role, gastrin stimulates the stomach mucosa to produce and secrete hydrochloric acid and the pancreas to secrete its digestive enzymes. It also stimulates smooth muscle contraction and increases blood circulation and water secretion in the stomach and intestine. The sequence is that of Gastrin (GAST) from Macropus giganteus (Eastern gray kangaroo).